We begin with the raw amino-acid sequence, 304 residues long: Glutaminase (304 aa).

Substrate-binding residues include S63, N114, E158, N165, Y189, Y240, and V258.

This sequence belongs to the glutaminase family. In terms of assembly, homotetramer.

It catalyses the reaction L-glutamine + H2O = L-glutamate + NH4(+). The chain is Glutaminase from Shewanella baltica (strain OS195).